A 102-amino-acid chain; its full sequence is Thioredoxin (102 aa).

The Thioredoxin domain maps to 2-102 (LHIDELTFEN…ILIHTINKYL (101 aa)). Catalysis depends on nucleophile residues Cys-29 and Cys-32. A disulfide bond links Cys-29 and Cys-32.

Belongs to the thioredoxin family.

Its subcellular location is the plastid. It is found in the chloroplast. In terms of biological role, participates in various redox reactions through the reversible oxidation of its active center dithiol to a disulfide and catalyzes dithiol-disulfide exchange reactions. This is Thioredoxin (trxA) from Cyanidioschyzon merolae (strain NIES-3377 / 10D) (Unicellular red alga).